An 85-amino-acid chain; its full sequence is Large ribosomal subunit protein bL27 (85 aa).

It belongs to the bacterial ribosomal protein bL27 family.

This is Large ribosomal subunit protein bL27 from Ruthia magnifica subsp. Calyptogena magnifica.